The primary structure comprises 700 residues: Elongation factor G (700 aa).

Residues 8-290 (ERYRNIGISA…AVIDYLPSPV (283 aa)) form the tr-type G domain. GTP is bound by residues 17–24 (AHIDAGKT), 88–92 (DTPGH), and 142–145 (NKMD).

This sequence belongs to the TRAFAC class translation factor GTPase superfamily. Classic translation factor GTPase family. EF-G/EF-2 subfamily.

Its subcellular location is the cytoplasm. Catalyzes the GTP-dependent ribosomal translocation step during translation elongation. During this step, the ribosome changes from the pre-translocational (PRE) to the post-translocational (POST) state as the newly formed A-site-bound peptidyl-tRNA and P-site-bound deacylated tRNA move to the P and E sites, respectively. Catalyzes the coordinated movement of the two tRNA molecules, the mRNA and conformational changes in the ribosome. The polypeptide is Elongation factor G (Paracidovorax citrulli (strain AAC00-1) (Acidovorax citrulli)).